Reading from the N-terminus, the 153-residue chain is Myoglobin (153 aa).

Residues 1-147 (MATACVKSLE…FSDECLDHLK (147 aa)) form the Globin domain. Residue His94 participates in heme b binding.

It belongs to the globin family. As to quaternary structure, homodimer; disulfide-linked. In terms of processing, the N-terminus is blocked. Body wall globin is localized in cellular compartments belonging to the hypodermis, the dorsal, ventral and lateral cords, the nerve ring, and body wall muscle.

The protein localises to the cytoplasm. Its function is as follows. High oxygen affinity. Probably supplies oxygen needed for muscle activity. The polypeptide is Myoglobin (Ascaris suum (Pig roundworm)).